The sequence spans 150 residues: Depactin (150 aa).

Residues 3–148 (SGTALDENVK…SEEAIGDKIK (146 aa)) form the ADF-H domain.

The protein belongs to the actin-binding proteins ADF family.

Depactin interacts with actin at some of its 12 N-terminal residues and 20 C-terminal residues. Binds to actin monomers from filaments and in solution. The protein is Depactin of Asterias amurensis (Northern Pacific seastar).